A 501-amino-acid chain; its full sequence is Glycerol kinase (501 aa).

T14 provides a ligand contact to ADP. Residues T14, T15, and S16 each contribute to the ATP site. T14 contacts sn-glycerol 3-phosphate. ADP is bound at residue R18. 3 residues coordinate sn-glycerol 3-phosphate: R84, E85, and Y136. Glycerol-binding residues include R84, E85, and Y136. H231 carries the phosphohistidine; by HPr modification. D245 contacts sn-glycerol 3-phosphate. Residues D245 and Q246 each contribute to the glycerol site. 2 residues coordinate ADP: T267 and G310. Residues T267, G310, Q314, and G411 each coordinate ATP. Positions 411 and 415 each coordinate ADP.

Belongs to the FGGY kinase family. In terms of assembly, homotetramer and homodimer (in equilibrium). In terms of processing, the phosphoenolpyruvate-dependent sugar phosphotransferase system (PTS), including enzyme I, and histidine-containing protein (HPr) are required for the phosphorylation of His-231, which leads to the activation of the enzyme.

The catalysed reaction is glycerol + ATP = sn-glycerol 3-phosphate + ADP + H(+). Its pathway is polyol metabolism; glycerol degradation via glycerol kinase pathway; sn-glycerol 3-phosphate from glycerol: step 1/1. Its activity is regulated as follows. Activated by phosphorylation and inhibited by fructose 1,6-bisphosphate (FBP). In terms of biological role, key enzyme in the regulation of glycerol uptake and metabolism. Catalyzes the phosphorylation of glycerol to yield sn-glycerol 3-phosphate. The polypeptide is Glycerol kinase (Enterococcus faecalis (strain ATCC 700802 / V583)).